The chain runs to 259 residues: UPF0246 protein NMCC_0856 (259 aa).

The protein belongs to the UPF0246 family.

This is UPF0246 protein NMCC_0856 from Neisseria meningitidis serogroup C (strain 053442).